An 814-amino-acid polypeptide reads, in one-letter code: Leucine-rich repeat-containing protein 41 (814 aa).

The segment at 45 to 54 (ALFELCGRAV) is interaction with Elongin BC complex. Phosphoserine is present on residues S155, S276, and S326. Residues 265-408 (LCGEASRGRA…KKGARTRQGC (144 aa)) are disordered. T327 is subject to Phosphothreonine. Residues 354–385 (TKRPPSAPATTSSASASSSTSSSKRAPASSAP) show a composition bias toward low complexity. Residue S375 is modified to Phosphoserine. Residues 389–403 (PLKRFKRAAGKKGAR) show a composition bias toward basic residues. LRR repeat units follow at residues 489 to 509 (WVSLESLTLSYNGLGSNIFRL), 520 to 532 (AGCRLRALHLSDL), 533 to 557 (FSPLPILELTRAIVRALPLLRVLSI), 615 to 637 (SGSLQQLSLDSATFASPQDFGLV), 638 to 661 (LQTLKEYNLTLKRLSFHDMNLADC), 703 to 730 (NSTLKGLRLPGNRLGNAGLLALADVFSE), and 733 to 754 (SSSLCQLDISSNCIKPDGLLEF).

Part of a E3 ubiquitin ligase complex with elongin BC complex (ELOB and ELOC), RBX1 and CUL5.

This is Leucine-rich repeat-containing protein 41 (LRRC41) from Bos taurus (Bovine).